Reading from the N-terminus, the 509-residue chain is Lysine--tRNA ligase (509 aa).

Positions 395 and 402 each coordinate Mg(2+).

It belongs to the class-II aminoacyl-tRNA synthetase family. In terms of assembly, homodimer. The cofactor is Mg(2+).

The protein resides in the cytoplasm. It carries out the reaction tRNA(Lys) + L-lysine + ATP = L-lysyl-tRNA(Lys) + AMP + diphosphate. The sequence is that of Lysine--tRNA ligase from Fervidobacterium nodosum (strain ATCC 35602 / DSM 5306 / Rt17-B1).